The sequence spans 40 residues: RapK inhibitor (40 aa).

Propeptides lie at residues methionine 1 to alanine 34 and glycine 40.

The protein belongs to the Phr family. Contains a predicted signal peptide cleavage site in the N-terminal region, however the propeptide is probably only subject to processing events at the ends of the mature peptide.

The protein localises to the secreted. It localises to the cytoplasm. Functionally, signaling molecule involved in the regulation of genetic competence development. Secreted during production, but the mature peptide acts intracellularly, indicating that it needs to be imported into the cell to function. Stimulates expression of the genes controlled by ComA, a transcriptional factor that regulates the development of genetic competence. Acts by inhibiting RapK, which regulates the activity of ComA. In Bacillus subtilis (strain 168), this protein is RapK inhibitor (phrK).